Reading from the N-terminus, the 398-residue chain is Bombesin receptor subtype-3 (398 aa).

The Extracellular segment spans residues 1–40 (MAQRQPHSPNQTLISITNDTESSSVVSNDNTNKGRSGDNS). Residues N10 and N18 are each glycosylated (N-linked (GlcNAc...) asparagine). Residues 41–62 (PGIEALCAIYITYAVIISVGIL) traverse the membrane as a helical segment. The Cytoplasmic portion of the chain corresponds to 63-81 (GNAILIKVFFKTKSMQTVP). The chain crosses the membrane as a helical span at residues 82–102 (NIFITSLAFGDLLLLLTCVPV). Topologically, residues 103 to 120 (DATHYLAEGWLFGRIGCK) are extracellular. A disulfide bridge connects residues C119 and C202. The helical transmembrane segment at 121-142 (VLSFIRLTSVGVSVFTLTILSA) threads the bilayer. The Cytoplasmic segment spans residues 143–162 (DRYKAVVKPLERQPSNAILK). The chain crosses the membrane as a helical span at residues 163 to 183 (TCIKAGCVWIVSMIFALPEAI). The Extracellular portion of the chain corresponds to 184 to 219 (FSNVYSFRDPNKNVTFESCTSYPVSKKLLQEIHSLL). Residues 220 to 240 (CFLVFYIIPLSIISVYYSLIA) traverse the membrane as a helical segment. Residues 241–271 (RTLYKSTLNIPTEEQGHARKQIESRKRIART) are Cytoplasmic-facing. Residues 272-292 (VLVLVALFALCWLPNHLLYLY) traverse the membrane as a helical segment. Residues 293–312 (HSFTSQTYVDPSAMHFIFTI) lie on the Extracellular side of the membrane. Residues 313–332 (FSRVLAFSNSCVNPFALYWL) traverse the membrane as a helical segment. Residues 333–398 (SKTFQKHFKA…CSVKQAEDRV (66 aa)) are Cytoplasmic-facing. C346 carries S-palmitoyl cysteine lipidation.

This sequence belongs to the G-protein coupled receptor 1 family. In terms of assembly, interacts with C6orf89.

The protein localises to the cell membrane. Its function is as follows. Role in sperm cell division, maturation, or function. This receptor mediates its action by association with G proteins that activate a phosphatidylinositol-calcium second messenger system. In Macaca mulatta (Rhesus macaque), this protein is Bombesin receptor subtype-3 (BRS3).